Here is a 578-residue protein sequence, read N- to C-terminus: Cyclin-SDS (578 aa).

The tract at residues 1–31 is disordered; sequence MKEIAMRNSKRKPEPTPFAGKKLRSTRLRRK. Positions 21-31 are enriched in basic residues; it reads KKLRSTRLRRK.

The protein belongs to the cyclin family. May interact with CDKA-1 and CDKB1-1.

In terms of biological role, meiosis-specific cyclin. Required for normal homolog synapsis and recombination in early to mid-prophase 1. May regulate the timing of sister chromatid separation. This is Cyclin-SDS (SDS) from Arabidopsis thaliana (Mouse-ear cress).